A 62-amino-acid polypeptide reads, in one-letter code: Photosystem II reaction center protein Z (62 aa).

The next 2 helical transmembrane spans lie at 8-28 (AVFALIATSSILLISVPVVFA) and 41-61 (FSGTSLWIGLVFLVGILNSLI).

This sequence belongs to the PsbZ family. In terms of assembly, PSII is composed of 1 copy each of membrane proteins PsbA, PsbB, PsbC, PsbD, PsbE, PsbF, PsbH, PsbI, PsbJ, PsbK, PsbL, PsbM, PsbT, PsbY, PsbZ, Psb30/Ycf12, at least 3 peripheral proteins of the oxygen-evolving complex and a large number of cofactors. It forms dimeric complexes.

The protein resides in the plastid. It localises to the chloroplast thylakoid membrane. Functionally, may control the interaction of photosystem II (PSII) cores with the light-harvesting antenna, regulates electron flow through the 2 photosystem reaction centers. PSII is a light-driven water plastoquinone oxidoreductase, using light energy to abstract electrons from H(2)O, generating a proton gradient subsequently used for ATP formation. The chain is Photosystem II reaction center protein Z from Coffea arabica (Arabian coffee).